Consider the following 186-residue polypeptide: Methylamine dehydrogenase light chain (186 aa).

A signal peptide (tat-type signal) is located at residues 1 to 57 (MLGKSQFDDLFEKMSRKVAGHTSRRGFIGRVGTAVAGVALVPLLPVDRRGRVSRANA). Intrachain disulfides connect C78–C143, C84–C116, C91–C176, C93–C141, C101–C132, and C133–C164. Residue W112 is modified to Tryptophylquinone. Residues 112-163 (WVASCYNPTDKQSYLISYRDCCGANVSGRCACLNTEGELPVYRPEFGNDIIW) constitute a cross-link (tryptophan tryptophylquinone (Trp-Trp)).

This sequence belongs to the aromatic amine dehydrogenase light chain family. As to quaternary structure, heterotetramer of two light and two heavy chains. Tryptophan tryptophylquinone residue serves as cofactor. Predicted to be exported by the Tat system. The position of the signal peptide cleavage has been experimentally proven. In terms of processing, tryptophan tryptophylquinone (TTQ) is formed by oxidation of the indole ring of a tryptophan to form tryptophylquinone followed by covalent cross-linking with another tryptophan residue.

Its subcellular location is the periplasm. It catalyses the reaction 2 oxidized [amicyanin] + methylamine + H2O = 2 reduced [amicyanin] + formaldehyde + NH4(+) + 2 H(+). The protein operates within one-carbon metabolism; methylamine degradation; formaldehyde from methylamine: step 1/1. Functionally, methylamine dehydrogenase carries out the oxidation of methylamine. Electrons are passed from methylamine dehydrogenase to amicyanin. This is Methylamine dehydrogenase light chain (mauA) from Methylorubrum extorquens (strain ATCC 14718 / DSM 1338 / JCM 2805 / NCIMB 9133 / AM1) (Methylobacterium extorquens).